The sequence spans 265 residues: MAQTMLLTSGVTAGHFLRNKSPLAQPKVHHLFLSGNSPVALPSRRQSFVPLALFKPKTKAAPKKVEKPKSKVEDGIFGTSGGIGFTKANELFVGRVAMIGFAASLLGEALTGKGILAQLNLETGIPIYEAEPLLLFFILFTLLGAIGALGDRGKFVDDPPTGLEKAVIPPGKNVRSALGLKEQGPLFGFTKANELFVGRLAQLGIAFSLIGEIITGKGALAQLNIETGIPIQDIEPLVLLNVAFFFFAAINPGNGKFITDDGEES.

Residues 1–59 (MAQTMLLTSGVTAGHFLRNKSPLAQPKVHHLFLSGNSPVALPSRRQSFVPLALFKPKTK) constitute a chloroplast transit peptide. Tandem repeats lie at residues 54 to 158 (FKPK…FVDD) and 159 to 264 (PPTG…DGEE). A run of 4 helical transmembrane segments spans residues 96 to 116 (VAMIGFAASLLGEALTGKGIL), 130 to 150 (AEPLLLFFILFTLLGAIGALG), 195 to 215 (LFVGRLAQLGIAFSLIGEIIT), and 229 to 249 (IPIQDIEPLVLLNVAFFFFAA).

The protein belongs to the ELIP/psbS family.

It localises to the plastid. The protein localises to the chloroplast thylakoid membrane. Its function is as follows. Plays an important role in non-photochemical quenching (NPQ), a process maintains the balance between dissipation and utilization of light energy to minimize generation of oxidizing molecules, thereby protecting the plant against photo-oxidative damage; acts upstream of DLDG1. Is not necessary for efficient light harvesting and photosynthesis. The chain is Photosystem II 22 kDa protein, chloroplastic from Arabidopsis thaliana (Mouse-ear cress).